Reading from the N-terminus, the 808-residue chain is Quinoprotein glucose dehydrogenase (808 aa).

Positions 1 to 33 are cleaved as a signal peptide; that stretch reads MSTTSRPGLWALITAAVFALCGAILTVGGAWVA. The next 4 helical transmembrane spans lie at 35–54, 59–76, 94–108, and 123–138; these read IGGP…TAFL, NPAA…TVIW, IVII…PFVS, and GAVG…SLFT. Residue aspartate 470 is the Proton acceptor of the active site. The tract at residues 514–545 is disordered; sequence VPAPETPVPQGAAPGDHTSPTQPMSQLTLRPK. Over residues 531–541 the composition is skewed to polar residues; it reads TSPTQPMSQLT.

This sequence belongs to the bacterial PQQ dehydrogenase family. Pyrroloquinoline quinone is required as a cofactor.

The protein localises to the cell inner membrane. It catalyses the reaction a ubiquinone + D-glucose = D-glucono-1,5-lactone + a ubiquinol. The chain is Quinoprotein glucose dehydrogenase (gdh) from Gluconobacter oxydans (strain 621H) (Gluconobacter suboxydans).